Here is a 206-residue protein sequence, read N- to C-terminus: Ribosomal RNA small subunit methyltransferase G (206 aa).

S-adenosyl-L-methionine-binding positions include Gly74, Leu79, 125-126 (VE), and Arg140.

The protein belongs to the methyltransferase superfamily. RNA methyltransferase RsmG family.

Its subcellular location is the cytoplasm. It catalyses the reaction guanosine(527) in 16S rRNA + S-adenosyl-L-methionine = N(7)-methylguanosine(527) in 16S rRNA + S-adenosyl-L-homocysteine. Its function is as follows. Specifically methylates the N7 position of guanine in position 527 of 16S rRNA. This Shewanella sp. (strain ANA-3) protein is Ribosomal RNA small subunit methyltransferase G.